A 447-amino-acid chain; its full sequence is NADH-ubiquinone oxidoreductase chain 4 (447 aa).

The next 13 membrane-spanning stretches (helical) occupy residues 28–48, 56–76, 85–105, 110–130, 141–161, 183–203, 213–233, 246–266, 273–293, 301–321, 343–365, 380–400, and 409–431; these read IFLA…FCDI, MISY…LMAS, YVNL…FTFS, FMFY…ILGW, IYLL…IFYI, FLYL…LVHL, PVSG…YGLL, FNYI…LICL, ALIA…LMTM, SYTL…LANI, SLSL…LNLL, LTMI…LYLF, and YSGV…LHWL.

It belongs to the complex I subunit 4 family.

Its subcellular location is the mitochondrion membrane. It catalyses the reaction a ubiquinone + NADH + 5 H(+)(in) = a ubiquinol + NAD(+) + 4 H(+)(out). Its function is as follows. Core subunit of the mitochondrial membrane respiratory chain NADH dehydrogenase (Complex I) that is believed to belong to the minimal assembly required for catalysis. Complex I functions in the transfer of electrons from NADH to the respiratory chain. The immediate electron acceptor for the enzyme is believed to be ubiquinone. This Aedes aegypti (Yellowfever mosquito) protein is NADH-ubiquinone oxidoreductase chain 4.